Here is a 378-residue protein sequence, read N- to C-terminus: Lysocardiolipin acyltransferase 1 (378 aa).

2 helical membrane-spanning segments follow: residues 9-29 (FVVA…GPFL) and 46-66 (IVAT…GAKV). The HXXXXD motif motif lies at 85–90 (HRTRMD). The next 2 membrane-spanning stretches (helical) occupy residues 302–322 (LRVL…PMGT) and 336–358 (FAAM…LIEL).

Belongs to the 1-acyl-sn-glycerol-3-phosphate acyltransferase family.

Its subcellular location is the endoplasmic reticulum membrane. It catalyses the reaction a 1-acyl-sn-glycero-3-phosphate + an acyl-CoA = a 1,2-diacyl-sn-glycero-3-phosphate + CoA. It carries out the reaction a 1-acyl-sn-glycero-3-phospho-(1D-myo-inositol) + an acyl-CoA = a 1,2-diacyl-sn-glycero-3-phospho-(1D-myo-inositol) + CoA. The enzyme catalyses 1-acyl-sn-glycero-3-phospho-(1'-sn-glycerol) + an acyl-CoA = a 1,2-diacyl-sn-glycero-3-phospho-(1'-sn-glycerol) + CoA. The catalysed reaction is 1-hexadecanoyl-sn-glycero-3-phosphate + (9Z)-octadecenoyl-CoA = 1-hexadecanoyl-2-(9Z-octadecenoyl)-sn-glycero-3-phosphate + CoA. It catalyses the reaction 1-(9Z-octadecenoyl)-sn-glycero-3-phosphate + (9Z)-octadecenoyl-CoA = 1,2-di-(9Z-octadecenoyl)-sn-glycero-3-phosphate + CoA. It carries out the reaction 1-(9Z,12Z)-octadecadienoyl-sn-glycero-3-phosphate + (9Z)-octadecenoyl-CoA = 1-(9Z,12Z)-octadecadienoyl-2-(9Z)-octadecenoyl-sn-glycero-3-phosphate + CoA. The enzyme catalyses 1-(9Z,12Z,15Z)-octadecatrienoyl-sn-glycero-3-phosphate + (9Z)-octadecenoyl-CoA = 1-(9Z,12Z,15Z)-octadecatrienoyl-2-(9Z)-octadecenoyl-sn-glycero-3-phosphate + CoA. The catalysed reaction is 1-(9Z-octadecenoyl)-sn-glycero-3-phosphate + hexadecanoyl-CoA = 1-(9Z)-octadecenoyl-2-hexadecanoyl-sn-glycero-3-phosphate + CoA. It catalyses the reaction 1-(9Z-octadecenoyl)-sn-glycero-3-phosphate + octadecanoyl-CoA = 1-(9Z-octadecenoyl)-2-octadecanoyl-sn-glycero-3-phosphate + CoA. It carries out the reaction 1-acyl-sn-glycero-3-phospho-(1'-sn-glycerol) + (9Z)-octadecenoyl-CoA = 1-acyl-2-(9Z-octadecenoyl)-sn-glycero-3-phospho-(1'-sn-glycerol) + CoA. The enzyme catalyses a 1-acyl-sn-glycero-3-phospho-(1D-myo-inositol) + (9Z)-octadecenoyl-CoA = a 1-acyl-2-(9Z-octadecenoyl)-sn-glycero-3-phospho-(1D-myo-inositol) + CoA. The catalysed reaction is 1-hexadecanoyl-sn-glycero-3-phospho-(1D-myo-inositol) + hexadecanoyl-CoA = 1,2-dihexadecanoyl-sn-glycero-3-phospho-(1D-myo-inositol) + CoA. It catalyses the reaction 1-hexadecanoyl-sn-glycero-3-phospho-(1D-myo-inositol) + octadecanoyl-CoA = 1-hexadecanoyl-2-octadecanoyl-sn-glycero-3-phospho-(1D-myo-inositol) + CoA. It carries out the reaction 1-hexadecanoyl-sn-glycero-3-phospho-(1D-myo-inositol) + (9Z)-octadecenoyl-CoA = 1-hexadecanoyl-2-(9Z-octadecenoyl)-sn-glycero-3-phospho-(1D-myo-inositol) + CoA. The enzyme catalyses 1-hexadecanoyl-sn-glycero-3-phospho-(1D-myo-inositol) + (9Z,12Z)-octadecadienoyl-CoA = 1-hexadecanoyl-2-(9Z,12Z-octadecadienoyl)-sn-glycero-3-phospho-(1D-myo-inositol) + CoA. The catalysed reaction is 1-hexadecanoyl-sn-glycero-3-phospho-(1D-myo-inositol) + (5Z,8Z,11Z,14Z)-eicosatetraenoyl-CoA = 1-hexadecanoyl-2-(5Z,8Z,11Z,14Z-eicosatetraenoyl)-sn-glycero-3-phospho-D-myo-inositol + CoA. It catalyses the reaction 1-hexadecanoyl-sn-glycero-3-phospho-(1'-sn-glycerol) + hexadecanoyl-CoA = 1,2-dihexadecanoyl-sn-glycero-3-phospho-(1'-sn-glycerol) + CoA. It carries out the reaction 1-hexadecanoyl-sn-glycero-3-phospho-(1'-sn-glycerol) + octadecanoyl-CoA = 1-hexadecanoyl-2-octadecanoyl-sn-glycero-3-phospho-(1'-sn-glycerol) + CoA. The enzyme catalyses 1-hexadecanoyl-sn-glycero-3-phospho-(1'-sn-glycerol) + (9Z)-octadecenoyl-CoA = 1-hexadecanoyl-2-(9Z-octadecenoyl)-sn-glycero-3-phospho-(1'-sn-glycerol) + CoA. The catalysed reaction is 1-hexadecanoyl-sn-glycero-3-phospho-(1'-sn-glycerol) + (9Z,12Z)-octadecadienoyl-CoA = 1-hexadecanoyl-2-(9Z,12Z-octadecadienoyl)-sn-glycero-3-phospho-(1'-sn-glycerol) + CoA. It catalyses the reaction 1-tetradecanoyl-sn-glycero-3-phospho-(1'-sn-glycerol) + (9Z)-octadecenoyl-CoA = 1-tetradecanoyl-2-(9Z-octadecenoyl)-sn-glycero-3-phospho-(1'-sn-glycerol) + CoA. It carries out the reaction 1-octadecanoyl-sn-glycero-3-phospho-(1'-sn-glycerol) + (9Z)-octadecenoyl-CoA = 1-octadecanoyl-2-(9Z-octadecenoyl)-sn-glycero-3-phospho-(1'-sn-glycerol) + CoA. The enzyme catalyses 1-(9Z-octadecenoyl)-sn-glycero-3-phospho-(1'-sn-glycerol) + (9Z)-octadecenoyl-CoA = 1,2-di-(9Z-octadecenoyl)-sn-glycero-3-phospho-(1'-sn-glycerol) + CoA. The catalysed reaction is 1-hexadecanoyl-sn-glycero-3-phospho-(1D-myo-inositol) + dodecanoyl-CoA = 1-hexadecanoyl-2-dodecanoyl-sn-glycero-3-phospho-(1D-myo-inositol) + CoA. It catalyses the reaction 1',3'-bis-[1-acyl-sn-glycero-3-phospho]-glycerol + (9Z)-octadecenoyl-CoA = 1'-[1-acyl-2-(9Z)-octadecenoyl-sn-glycero-3-phospho],3'-[1-acyl,2-hydroxy-sn-glycero-3-phospho]-glycerol + CoA. It carries out the reaction 1'-[1,2-diacyl-sn-glycero-3-phospho],3'-[1-acyl-sn-glycero-3-phospho]-glycerol + (9Z)-octadecenoyl-CoA = 1'-[1,2-diacyl-sn-glycero-3-phospho],3'-[1-acyl,2-(9Z)-octadecenoyl-sn-glycero-3-phospho]-glycerol + CoA. The enzyme catalyses 1'-[1,2-diacyl-sn-glycero-3-phospho],3'-[1-acyl-sn-glycero-3-phospho]-glycerol + (9Z,12Z)-octadecadienoyl-CoA = 1'-[1,2-diacyl-sn-glycero-3-phospho],3'-[1-acyl,2-(9Z,12Z)-octadecadienoyl-sn-glycero-3-phospho]-glycerol + CoA. The catalysed reaction is 1'-[1,2-diacyl-sn-glycero-3-phospho],3'-[1-acyl-sn-glycero-3-phospho]-glycerol + dodecanoyl-CoA = 1'-[1,2-diacyl-sn-glycero-3-phospho],3'-[1-acyl,2-dodecanoyl-sn-glycero-3-phospho]-glycerol + CoA. It catalyses the reaction 1',3'-bis-[1-acyl-sn-glycero-3-phospho]-glycerol + dodecanoyl-CoA = 1'-[1-acyl-2-dodecanoyl-sn-glycero-3-phospho],3'-[1-acyl,2-hydroxy-sn-glycero-3-phospho]-glycerol + CoA. It carries out the reaction a 1-acyl-sn-glycero-3-phosphate + (9Z)-octadecenoyl-CoA = a 1-acyl-2-(9Z-octadecenoyl)-sn-glycero-3-phosphate + CoA. The enzyme catalyses 1',3'-bis-[1-acyl-sn-glycero-3-phospho]-glycerol + (9Z,12Z)-octadecadienoyl-CoA = 1'-[1-acyl-2-(9Z,12Z)-octadecadienoyl-sn-glycero-3-phospho],3'-[1-acyl,2-hydroxy-sn-glycero-3-phospho]-glycerol + CoA. The catalysed reaction is 1',3'-bis-[1-acyl-sn-glycero-3-phospho]-glycerol + hexadecanoyl-CoA = 1'-[1-acyl-2-hexadecanoyl-sn-glycero-3-phospho],3'-[1-acyl,2-hydroxy-sn-glycero-3-phospho]-glycerol + CoA. It catalyses the reaction 1',3'-bis-[1-acyl-sn-glycero-3-phospho]-glycerol + octadecanoyl-CoA = 1'-[1-acyl-2-octadecanoyl-sn-glycero-3-phospho],3'-[1-acyl,2-hydroxy-sn-glycero-3-phospho]-glycerol + CoA. It carries out the reaction 1'-[1,2-diacyl-sn-glycero-3-phospho],3'-[1-acyl-sn-glycero-3-phospho]-glycerol + octanoyl-CoA = 1'-[1,2-diacyl-sn-glycero-3-phospho],3'-[1-acyl,2-octanoyl-sn-glycero-3-phospho]-glycerol + CoA. The enzyme catalyses 1',3'-bis-[1-acyl-sn-glycero-3-phospho]-glycerol + octanoyl-CoA = 1'-[1-acyl-2-octanoyl-sn-glycero-3-phospho],3'-[1-acyl,2-hydroxy-sn-glycero-3-phospho]-glycerol + CoA. The catalysed reaction is 1'-[1,2-diacyl-sn-glycero-3-phospho],3'-[1-acyl-sn-glycero-3-phospho]-glycerol + hexadecanoyl-CoA = 1'-[1,2-diacyl-sn-glycero-3-phospho],3'-[1-acyl,2-hexadecanoyl-sn-glycero-3-phospho]-glycerol + CoA. It catalyses the reaction 1'-[1,2-diacyl-sn-glycero-3-phospho],3'-[1-acyl-sn-glycero-3-phospho]-glycerol + (5Z,8Z,11Z,14Z)-eicosatetraenoyl-CoA = 1'-[1,2-diacyl-sn-glycero-3-phospho],3'-[1-acyl,2-(5Z,8Z,11Z,14Z)-eicosatetraenoyl-sn-glycero-3-phospho]-glycerol + CoA. It carries out the reaction 1',3'-bis-[1-acyl-sn-glycero-3-phospho]-glycerol + (5Z,8Z,11Z,14Z)-eicosatetraenoyl-CoA = 1'-[1-acyl-2-(5Z,8Z,11Z,14Z)-eicosatetraenoyl-sn-glycero-3-phospho],3'-[1-acyl,2-hydroxy-sn-glycero-3-phospho]-glycerol + CoA. The enzyme catalyses a 1-acyl-sn-glycero-3-phospho-(1D-myo-inositol) + octadecanoyl-CoA = a 1-acyl-2-octadecanoyl-sn-glycero-3-phospho-(1D-myo-inositol) + CoA. The catalysed reaction is a 2-acyl-sn-glycero-3-phospho-D-myo-inositol + octadecanoyl-CoA = 1-octadecanoyl-2-acyl-sn-glycero-3-phospho-1D-myo-inositol + CoA. Its pathway is phospholipid metabolism; CDP-diacylglycerol biosynthesis; CDP-diacylglycerol from sn-glycerol 3-phosphate: step 2/3. Functionally, exhibits acyl-CoA:lysocardiolipin acyltransferase (ALCAT) activity; catalyzes the reacylation of lyso-cardiolipin to cardiolipin (CL), a key step in CL remodeling. Recognizes both monolysocardiolipin and dilysocardiolipin as substrates with a preference for linoleoyl-CoA and oleoyl-CoA as acyl donors. Also exhibits 1-acyl-sn-glycerol-3-phosphate acyltransferase activity (AGPAT) activity; converts 1-acyl-sn-glycerol-3- phosphate (lysophosphatidic acid or LPA) into 1,2-diacyl-sn-glycerol-3- phosphate (phosphatidic acid or PA) by incorporating an acyl moiety at the sn-2 position of the glycerol backbone. Possesses both lysophosphatidylinositol acyltransferase (LPIAT) and lysophosphatidylglycerol acyltransferase (LPGAT) activities. Required for establishment of the hematopoietic and endothelial lineages. The protein is Lysocardiolipin acyltransferase 1 (LCLAT1) of Gallus gallus (Chicken).